We begin with the raw amino-acid sequence, 353 residues long: S-adenosylmethionine:tRNA ribosyltransferase-isomerase (353 aa).

Belongs to the QueA family. In terms of assembly, monomer.

It is found in the cytoplasm. The catalysed reaction is 7-aminomethyl-7-carbaguanosine(34) in tRNA + S-adenosyl-L-methionine = epoxyqueuosine(34) in tRNA + adenine + L-methionine + 2 H(+). The protein operates within tRNA modification; tRNA-queuosine biosynthesis. Its function is as follows. Transfers and isomerizes the ribose moiety from AdoMet to the 7-aminomethyl group of 7-deazaguanine (preQ1-tRNA) to give epoxyqueuosine (oQ-tRNA). This is S-adenosylmethionine:tRNA ribosyltransferase-isomerase from Burkholderia vietnamiensis (strain G4 / LMG 22486) (Burkholderia cepacia (strain R1808)).